The chain runs to 441 residues: Zinc finger and BTB domain-containing protein 26 (441 aa).

The BTB domain occupies 33 to 97 (CDVTVLIDDI…CYSGVLEFPE (65 aa)). The tract at residues 134–177 (DSKEGCEPQSASPQSKEQQGDARGSPKQDSPCIHPSEDSMDMED) is disordered. A Glycyl lysine isopeptide (Lys-Gly) (interchain with G-Cter in SUMO2) cross-link involves residue Lys-184. Positions 194-216 (VRSKKDQNQFISSEPTALHSSEP) are disordered. The span at 201 to 216 (NQFISSEPTALHSSEP) shows a compositional bias: polar residues. Residue Lys-255 forms a Glycyl lysine isopeptide (Lys-Gly) (interchain with G-Cter in SUMO2) linkage. C2H2-type zinc fingers lie at residues 273-295 (HQCP…LKMH), 298-320 (FMCL…MRVH), 326-348 (FQCK…LNLH), and 354-377 (HKCN…KQLH). Residue Lys-329 forms a Glycyl lysine isopeptide (Lys-Gly) (interchain with G-Cter in SUMO2) linkage.

Ubiquitous.

The protein localises to the nucleus. Its function is as follows. May be involved in transcriptional regulation. The sequence is that of Zinc finger and BTB domain-containing protein 26 (ZBTB26) from Homo sapiens (Human).